A 209-amino-acid chain; its full sequence is Lysine-rich arabinogalactan protein 18 (209 aa).

Positions M1–G21 are cleaved as a signal peptide. The segment at G21–A185 is disordered. Low complexity predominate over residues S23–S79. 2 stretches are compositionally biased toward pro residues: residues S80 to A95 and S103 to V119. Basic residues predominate over residues S132 to Q145. The span at A149–S164 shows a compositional bias: pro residues. A lipid anchor (GPI-anchor amidated glycine) is attached at G183. Residues A184 to F209 constitute a propeptide, removed in mature form.

This sequence belongs to the lysine-rich AGP family. O-glycosylated on the hydroxyproline residues. As to expression, predominantly expressed in flowers, and moderately expressed in roots, stems and young leaves.

Its subcellular location is the cell membrane. Its function is as follows. Proteoglycan that seems to be implicated in diverse developmental roles such as differentiation, cell-cell recognition, embryogenesis and programmed cell death. This is Lysine-rich arabinogalactan protein 18 (AGP18) from Arabidopsis thaliana (Mouse-ear cress).